Consider the following 312-residue polypeptide: R2-like ligand binding oxidase (312 aa).

Residues Glu68, Glu101, and His104 each coordinate Mn(2+). Positions 71 to 162 form a cross-link, 3-(O4'-tyrosyl)-valine (Val-Tyr); the sequence is VTQDIQPFMA…AAQVRASATY (92 aa). Glu101 contributes to the Fe cation binding site. Residues Glu167, Glu202, and His205 each coordinate Fe cation.

It belongs to the ribonucleoside diphosphate reductase small chain family. R2-like ligand binding oxidase subfamily. In terms of assembly, homodimer. Requires Fe cation as cofactor. It depends on Mn(2+) as a cofactor.

In terms of biological role, probable oxidase that might be involved in lipid metabolism. In Mycobacterium sp. (strain KMS), this protein is R2-like ligand binding oxidase.